Reading from the N-terminus, the 294-residue chain is MKPFLRWCFVATALTLAGCSNTSWRKSEVLAVPLQPTLQQEVILARMEQILASRALTDDERAQLLYERGVLYDSLGLRALARNDFSQALAIRPDMPEVFNYLGIYLTQAGNFDAAYEAFDSVLELDPTYNYAHLNRGIALYYGGRDKLAQDDLLAFYQDDPNDPFRSLWLYLAEQKLDEKQAKEVLKQHFEKSDKEQWGWNIVEFYLGNISEQTLMERLKADATDNTSLAEHLSETNFYLGKYYLSLGDSDSATALFKLAVANNVHNFVEHRYALLELSLLGQDQDDLAESDQQ.

An N-terminal signal peptide occupies residues 1-18 (MKPFLRWCFVATALTLAG). Residue cysteine 19 is the site of N-palmitoyl cysteine attachment. Residue cysteine 19 is the site of S-diacylglycerol cysteine attachment. TPR repeat units follow at residues 62 to 95 (AQLLYERGVLYDSLGLRALARNDFSQALAIRPDM), 96 to 129 (PEVFNYLGIYLTQAGNFDAAYEAFDSVLELDPTY), and 234 to 267 (SETNFYLGKYYLSLGDSDSATALFKLAVANNVHN).

As to quaternary structure, homodimer.

The protein localises to the cell membrane. Its function is as follows. May be involved in cell division. May play a role in bacterial septation or regulation of cell wall degradation during cell division. This Shigella boydii serotype 4 (strain Sb227) protein is Lipoprotein NlpI (nlpI).